The sequence spans 572 residues: Proteinaceous RNase P 1, chloroplastic/mitochondrial (572 aa).

A chloroplast and mitochondrion-targeting transit peptide spans 1-70 (MLRLTCFTPS…SRHLCTLPLA (70 aa)). PPR repeat units follow at residues 96-130 (PEAL…GVQL), 136-174 (NVLL…KVVP), 175-209 (NEAT…GIQP), and 210-244 (RLRS…EVVP). In terms of domain architecture, PRORP spans 338 to 565 (MDENGVCKCC…DLQTSRQWLC (228 aa)). Zn(2+) is bound by residues Cys344 and Cys347. Positions 399, 474, 475, and 493 each coordinate Mn(2+). 2 residues coordinate Zn(2+): His548 and Cys565.

The protein belongs to the PPR family. P subfamily. It depends on Mg(2+) as a cofactor. Mn(2+) is required as a cofactor.

Its subcellular location is the mitochondrion. It is found in the plastid. The protein resides in the chloroplast. It catalyses the reaction Endonucleolytic cleavage of RNA, removing 5'-extranucleotides from tRNA precursor.. In terms of biological role, endonuclease RNase P responsible for the 5' maturation of tRNA precursors. Preferentially cleaves at the unusual cleavage site, but also able to cleave at the classical cleavage site. Also involved in the maturation of mRNAs in mitochondria. The protein is Proteinaceous RNase P 1, chloroplastic/mitochondrial (PRORP1) of Arabidopsis thaliana (Mouse-ear cress).